Here is a 485-residue protein sequence, read N- to C-terminus: NADH-quinone oxidoreductase subunit N (485 aa).

The next 14 helical transmembrane spans lie at 8 to 28, 35 to 55, 71 to 91, 105 to 125, 127 to 147, 159 to 179, 203 to 223, 235 to 255, 271 to 291, 297 to 317, 326 to 346, 373 to 393, 408 to 430, and 455 to 475; these read LIAL…MLSI, FLNA…LWFV, GFAM…CTFA, FYLL…ANHL, TLFL…GYAF, YTIL…LVYA, LLAG…LVPF, PAPV…GVVM, VVLG…ALSQ, LLGY…IALQ, VGVY…VVSL, AAVM…LGFI, WWLV…RVAV, and IVVL…QPLI.

The protein belongs to the complex I subunit 2 family. As to quaternary structure, NDH-1 is composed of 13 different subunits. Subunits NuoA, H, J, K, L, M, N constitute the membrane sector of the complex.

Its subcellular location is the cell inner membrane. The catalysed reaction is a quinone + NADH + 5 H(+)(in) = a quinol + NAD(+) + 4 H(+)(out). Functionally, NDH-1 shuttles electrons from NADH, via FMN and iron-sulfur (Fe-S) centers, to quinones in the respiratory chain. The immediate electron acceptor for the enzyme in this species is believed to be ubiquinone. Couples the redox reaction to proton translocation (for every two electrons transferred, four hydrogen ions are translocated across the cytoplasmic membrane), and thus conserves the redox energy in a proton gradient. The protein is NADH-quinone oxidoreductase subunit N of Salmonella paratyphi A (strain ATCC 9150 / SARB42).